A 95-amino-acid polypeptide reads, in one-letter code: Small ribosomal subunit protein bS18 (95 aa).

It belongs to the bacterial ribosomal protein bS18 family. In terms of assembly, part of the 30S ribosomal subunit. Forms a tight heterodimer with protein bS6.

In terms of biological role, binds as a heterodimer with protein bS6 to the central domain of the 16S rRNA, where it helps stabilize the platform of the 30S subunit. The protein is Small ribosomal subunit protein bS18 of Rickettsia rickettsii (strain Sheila Smith).